A 187-amino-acid chain; its full sequence is Transmembrane protein 17A (187 aa).

Helical transmembrane passes span 49–69 (IFLY…VIML), 82–102 (FILV…LYLG), 114–134 (LAGF…FLLC), and 146–166 (AVHG…IFAL).

This sequence belongs to the TMEM17 family. As to quaternary structure, part of the tectonic-like complex (also named B9 complex).

The protein localises to the cell projection. Its subcellular location is the cilium membrane. Transmembrane component of the tectonic-like complex, a complex localized at the transition zone of primary cilia and acting as a barrier that prevents diffusion of transmembrane proteins between the cilia and plasma membranes. Required for ciliogenesis and sonic hedgehog/SHH signaling. The protein is Transmembrane protein 17A (tmem17-a) of Xenopus tropicalis (Western clawed frog).